The chain runs to 591 residues: Aspartate--tRNA(Asp/Asn) ligase (591 aa).

E175 is an L-aspartate binding site. The segment at 199–202 (QQFK) is aspartate. Residues R221 and H453 each coordinate L-aspartate. 221 to 223 (RDE) is a binding site for ATP. E486 contributes to the ATP binding site. Position 493 (R493) interacts with L-aspartate. An ATP-binding site is contributed by 538–541 (GIDR).

It belongs to the class-II aminoacyl-tRNA synthetase family. Type 1 subfamily. As to quaternary structure, homodimer.

It localises to the cytoplasm. The enzyme catalyses tRNA(Asx) + L-aspartate + ATP = L-aspartyl-tRNA(Asx) + AMP + diphosphate. Functionally, aspartyl-tRNA synthetase with relaxed tRNA specificity since it is able to aspartylate not only its cognate tRNA(Asp) but also tRNA(Asn). Reaction proceeds in two steps: L-aspartate is first activated by ATP to form Asp-AMP and then transferred to the acceptor end of tRNA(Asp/Asn). This is Aspartate--tRNA(Asp/Asn) ligase from Jannaschia sp. (strain CCS1).